A 330-amino-acid polypeptide reads, in one-letter code: DNA-directed RNA polymerase subunit alpha (330 aa).

Residues 1–236 (MQGSVTEFLK…EQLDAFVDLR (236 aa)) form an alpha N-terminal domain (alpha-NTD) region. The segment at 250-330 (FDPILLRPVD…NWPPASIAED (81 aa)) is alpha C-terminal domain (alpha-CTD).

It belongs to the RNA polymerase alpha chain family. In terms of assembly, homodimer. The RNAP catalytic core consists of 2 alpha, 1 beta, 1 beta' and 1 omega subunit. When a sigma factor is associated with the core the holoenzyme is formed, which can initiate transcription.

It carries out the reaction RNA(n) + a ribonucleoside 5'-triphosphate = RNA(n+1) + diphosphate. Its function is as follows. DNA-dependent RNA polymerase catalyzes the transcription of DNA into RNA using the four ribonucleoside triphosphates as substrates. The polypeptide is DNA-directed RNA polymerase subunit alpha (Vibrio vulnificus (strain CMCP6)).